The chain runs to 2463 residues: Protein TIC 214 (2463 aa).

Helical transmembrane passes span 18 to 38 (VGLYYGFISAFSIGSSYLFLL), 60 to 80 (FFTGQLLIFISILYGPLHLAL), 86 to 106 (ILLLLAPYFFFHYLFSNSGQW), 127 to 147 (LVFLNNLLFQLFSLSLLGRPM), 170 to 190 (FVGWLIGHILVLKWAGLVFVW), and 297 to 317 (LFSIILFAIFLLYLDQTPLLY). Positions 326–441 (QLQRKLSNET…AARAMQEAYK (116 aa)) form a coiled coil. Disordered stretches follow at residues 792-841 (AVPK…RKVN), 1230-1249 (SIQKDPKKEKDPKKEKGPKK), 1393-1417 (SGGRETPEFTRSQKDIDNLKNEQDF), 2116-2136 (EEEKIEKEKRKKERKKEKLKK), and 2162-2187 (KQRAKNIARMEEEDKKARKKRKRKVQ). Residues 794 to 830 (PKKKKKISKSKQKNVKSKQKNVKSKQKNVKSKQKNVK) show a composition bias toward basic residues. Basic and acidic residues-rich tracts occupy residues 832-841 (KQNEIKRKVN), 1231-1249 (IQKDPKKEKDPKKEKGPKK), and 1397-1417 (ETPEFTRSQKDIDNLKNEQDF). The stretch at 2049–2192 (WDALVASLKQ…KRKVQVQENK (144 aa)) forms a coiled coil. A compositionally biased stretch (basic residues) spans 2124 to 2136 (KRKKERKKEKLKK).

This sequence belongs to the TIC214 family. In terms of assembly, part of the Tic complex.

The protein localises to the plastid. It localises to the chloroplast inner membrane. In terms of biological role, involved in protein precursor import into chloroplasts. May be part of an intermediate translocation complex acting as a protein-conducting channel at the inner envelope. This Oenothera elata subsp. hookeri (Hooker's evening primrose) protein is Protein TIC 214.